The sequence spans 475 residues: Chemotaxis protein MotD (475 aa).

3 disordered regions span residues Met-1–Gly-175, Leu-195–Asp-243, and Gly-408–Met-475. Polar residues predominate over residues Arg-9–Val-22. The segment covering Ala-79–Ala-100 has biased composition (low complexity). A compositionally biased stretch (basic and acidic residues) spans His-143 to Ile-155. Residues Gly-408–Gln-417 show a composition bias toward gly residues. Residues Glu-427–Thr-449 show a composition bias toward basic and acidic residues.

It localises to the cytoplasm. Required for the rotation of the flagellar motor. Has a positive effect as flagellar rotation increases when an excess of motd is present. This is Chemotaxis protein MotD (motD) from Rhizobium meliloti (Ensifer meliloti).